Consider the following 164-residue polypeptide: 6,7-dimethyl-8-ribityllumazine synthase (164 aa).

5-amino-6-(D-ribitylamino)uracil-binding positions include Phe24, 58 to 60 (ALE), and 82 to 84 (AVI). 87–88 (ET) serves as a coordination point for (2S)-2-hydroxy-3-oxobutyl phosphate. Residue His90 is the Proton donor of the active site. Residue Asn115 coordinates 5-amino-6-(D-ribitylamino)uracil. Arg129 contributes to the (2S)-2-hydroxy-3-oxobutyl phosphate binding site.

It belongs to the DMRL synthase family.

It carries out the reaction (2S)-2-hydroxy-3-oxobutyl phosphate + 5-amino-6-(D-ribitylamino)uracil = 6,7-dimethyl-8-(1-D-ribityl)lumazine + phosphate + 2 H2O + H(+). It functions in the pathway cofactor biosynthesis; riboflavin biosynthesis; riboflavin from 2-hydroxy-3-oxobutyl phosphate and 5-amino-6-(D-ribitylamino)uracil: step 1/2. Functionally, catalyzes the formation of 6,7-dimethyl-8-ribityllumazine by condensation of 5-amino-6-(D-ribitylamino)uracil with 3,4-dihydroxy-2-butanone 4-phosphate. This is the penultimate step in the biosynthesis of riboflavin. This Ralstonia nicotianae (strain ATCC BAA-1114 / GMI1000) (Ralstonia solanacearum) protein is 6,7-dimethyl-8-ribityllumazine synthase.